The primary structure comprises 244 residues: Ethylene-responsive transcription factor ERF013 (244 aa).

Residues 1-33 are disordered; it reads MVKQELKIQVTTSSSSLSHSSSSSSSSTSALRH. The segment covering 11–29 has biased composition (low complexity); it reads TTSSSSLSHSSSSSSSSTS. The segment at residues 42 to 99 is a DNA-binding region (AP2/ERF); that stretch reads KYKGVRMRSWGSWVTEIRAPNQKTRIWLGSYSTAEAAARAYDAALLCLKGPKANLNFP. Residues 123 to 178 form a disordered region; sequence QKVAAQAANSSSDHFTPPSDENDHDHDDGLDHHPSASSSAASSPPDDDHHNDDDGD. Positions 143 to 156 are enriched in basic and acidic residues; sequence ENDHDHDDGLDHHP. Low complexity predominate over residues 157 to 166; that stretch reads SASSSAASSP.

This sequence belongs to the AP2/ERF transcription factor family. ERF subfamily.

Its subcellular location is the nucleus. In terms of biological role, probably acts as a transcriptional activator. Binds to the GCC-box pathogenesis-related promoter element. May be involved in the regulation of gene expression by stress factors and by components of stress signal transduction pathways. The sequence is that of Ethylene-responsive transcription factor ERF013 (ERF013) from Arabidopsis thaliana (Mouse-ear cress).